We begin with the raw amino-acid sequence, 78 residues long: ATP synthase subunit c (78 aa).

A run of 2 helical transmembrane segments spans residues 9–29 (AFIG…GQGW) and 56–76 (AAVT…LVFV).

This sequence belongs to the ATPase C chain family. F-type ATPases have 2 components, F(1) - the catalytic core - and F(0) - the membrane proton channel. F(1) has five subunits: alpha(3), beta(3), gamma(1), delta(1), epsilon(1). F(0) has three main subunits: a(1), b(2) and c(10-14). The alpha and beta chains form an alternating ring which encloses part of the gamma chain. F(1) is attached to F(0) by a central stalk formed by the gamma and epsilon chains, while a peripheral stalk is formed by the delta and b chains.

It localises to the cell membrane. In terms of biological role, f(1)F(0) ATP synthase produces ATP from ADP in the presence of a proton or sodium gradient. F-type ATPases consist of two structural domains, F(1) containing the extramembraneous catalytic core and F(0) containing the membrane proton channel, linked together by a central stalk and a peripheral stalk. During catalysis, ATP synthesis in the catalytic domain of F(1) is coupled via a rotary mechanism of the central stalk subunits to proton translocation. Functionally, key component of the F(0) channel; it plays a direct role in translocation across the membrane. A homomeric c-ring of between 10-14 subunits forms the central stalk rotor element with the F(1) delta and epsilon subunits. This is ATP synthase subunit c from Malacoplasma penetrans (strain HF-2) (Mycoplasma penetrans).